A 644-amino-acid chain; its full sequence is Threonine--tRNA ligase (644 aa).

The 61-residue stretch at M1–T61 folds into the TGS domain. Residues D242–P535 are catalytic. Residues C335, H386, and H512 each coordinate Zn(2+).

The protein belongs to the class-II aminoacyl-tRNA synthetase family. Homodimer. The cofactor is Zn(2+).

The protein localises to the cytoplasm. The enzyme catalyses tRNA(Thr) + L-threonine + ATP = L-threonyl-tRNA(Thr) + AMP + diphosphate + H(+). Catalyzes the attachment of threonine to tRNA(Thr) in a two-step reaction: L-threonine is first activated by ATP to form Thr-AMP and then transferred to the acceptor end of tRNA(Thr). Also edits incorrectly charged L-seryl-tRNA(Thr). The polypeptide is Threonine--tRNA ligase (Acidithiobacillus ferrooxidans (strain ATCC 23270 / DSM 14882 / CIP 104768 / NCIMB 8455) (Ferrobacillus ferrooxidans (strain ATCC 23270))).